A 150-amino-acid chain; its full sequence is Probable histone H2A.5 (150 aa).

Low complexity predominate over residues 1–12 (MESSQATTKPTR). Disordered stretches follow at residues 1–28 (MESS…SVSK) and 130–150 (KSTA…PKKA). Residues 131–150 (STASSSQAEKASATKSPKKA) are compositionally biased toward polar residues. S146 is subject to Phosphoserine. The short motif at 146-149 (SPKK) is the SPKK motif element.

The protein belongs to the histone H2A family. The nucleosome is a histone octamer containing two molecules each of H2A, H2B, H3 and H4 assembled in one H3-H4 heterotetramer and two H2A-H2B heterodimers. The octamer wraps approximately 147 bp of DNA. Not ubiquitinated.

The protein localises to the nucleus. Its subcellular location is the chromosome. Its function is as follows. Core component of nucleosome. Nucleosomes wrap and compact DNA into chromatin, limiting DNA accessibility to the cellular machineries which require DNA as a template. Histones thereby play a central role in transcription regulation, DNA repair, DNA replication and chromosomal stability. DNA accessibility is regulated via a complex set of post-translational modifications of histones, also called histone code, and nucleosome remodeling. This Arabidopsis thaliana (Mouse-ear cress) protein is Probable histone H2A.5.